The following is a 289-amino-acid chain: Probable endonuclease 4 (289 aa).

Residues histidine 74, histidine 115, glutamate 150, aspartate 184, histidine 187, histidine 218, aspartate 231, histidine 233, and glutamate 263 each contribute to the Zn(2+) site.

Belongs to the AP endonuclease 2 family. Zn(2+) serves as cofactor.

The enzyme catalyses Endonucleolytic cleavage to 5'-phosphooligonucleotide end-products.. In terms of biological role, endonuclease IV plays a role in DNA repair. It cleaves phosphodiester bonds at apurinic or apyrimidinic (AP) sites, generating a 3'-hydroxyl group and a 5'-terminal sugar phosphate. The polypeptide is Probable endonuclease 4 (Mycoplasma capricolum subsp. capricolum (strain California kid / ATCC 27343 / NCTC 10154)).